The sequence spans 271 residues: MSRIQNTFAALAAQGRKGLIPFITAGDPDPAKTVELMHALAEGGADVIELGVPFSDPMADGPVIQRSSERALAKGVTLHSVLDDVKRFRARDQKTPVVLMGYANPIERMGADAFAAAARDAGVDGVLVVDYPPEESHDFAAKMRAAGIDPIFLLAPTSTDDRIAAVGQVASGYVYYVSLKGVTGAANLDVSSIAGKIPAIKSRVPLPVGVGFGIRDAATARAVAEVADAVVIGSRLVQLLEQAAPERAAAELAGFVAELRVAIDGAAKPAA.

Residues E49 and D60 each act as proton acceptor in the active site.

This sequence belongs to the TrpA family. As to quaternary structure, tetramer of two alpha and two beta chains.

It carries out the reaction (1S,2R)-1-C-(indol-3-yl)glycerol 3-phosphate + L-serine = D-glyceraldehyde 3-phosphate + L-tryptophan + H2O. It functions in the pathway amino-acid biosynthesis; L-tryptophan biosynthesis; L-tryptophan from chorismate: step 5/5. Functionally, the alpha subunit is responsible for the aldol cleavage of indoleglycerol phosphate to indole and glyceraldehyde 3-phosphate. This Burkholderia pseudomallei (strain K96243) protein is Tryptophan synthase alpha chain.